We begin with the raw amino-acid sequence, 120 residues long: Histone H2B (120 aa).

Residues 1–26 are disordered; it reads MAEPAKKKPKKLPKKDKGQKDIKRKK. A Blocked amino end (Ala) modification is found at A2. K7, K10, and K11 each carry N6-acetyllysine. Residue K115 forms a Glycyl lysine isopeptide (Lys-Gly) (interchain with G-Cter in ubiquitin) linkage.

Belongs to the histone H2B family. In terms of assembly, the nucleosome is a histone octamer containing two molecules each of H2A, H2B, H3 and H4 assembled in one H3-H4 heterotetramer and two H2A-H2B heterodimers. The octamer wraps approximately 147 bp of DNA. In terms of processing, can be acetylated to form H2BK6ac, H2BK33ac and H2BK34ac. Post-translationally, monoubiquitinated to form H2BK143ub1; may give a specific tag for epigenetic transcriptional activation.

It localises to the nucleus. The protein resides in the chromosome. Functionally, core component of nucleosome. Nucleosomes wrap and compact DNA into chromatin, limiting DNA accessibility to the cellular machineries which require DNA as a template. Histones thereby play a central role in transcription regulation, DNA repair, DNA replication and chromosomal stability. DNA accessibility is regulated via a complex set of post-translational modifications of histones, also called histone code, and nucleosome remodeling. The polypeptide is Histone H2B (Pisum sativum (Garden pea)).